A 100-amino-acid polypeptide reads, in one-letter code: MIREERLLKVILAPHISEKSTVVAEKTNTVVFRVAIDATKAEIKAAVAKLFEVEVDSVRTLVNKGKTKRTGGRVGRRSDWKKAYVTLAAGADIDFVGGAE.

It belongs to the universal ribosomal protein uL23 family. As to quaternary structure, part of the 50S ribosomal subunit. Contacts protein L29, and trigger factor when it is bound to the ribosome.

In terms of biological role, one of the early assembly proteins it binds 23S rRNA. One of the proteins that surrounds the polypeptide exit tunnel on the outside of the ribosome. Forms the main docking site for trigger factor binding to the ribosome. The sequence is that of Large ribosomal subunit protein uL23 from Shewanella denitrificans (strain OS217 / ATCC BAA-1090 / DSM 15013).